We begin with the raw amino-acid sequence, 164 residues long: Crossover junction endodeoxyribonuclease RuvC (164 aa).

Active-site residues include Asp7, Glu67, and Asp140. Mg(2+) is bound by residues Asp7, Glu67, and Asp140.

This sequence belongs to the RuvC family. Homodimer which binds Holliday junction (HJ) DNA. The HJ becomes 2-fold symmetrical on binding to RuvC with unstacked arms; it has a different conformation from HJ DNA in complex with RuvA. In the full resolvosome a probable DNA-RuvA(4)-RuvB(12)-RuvC(2) complex forms which resolves the HJ. Mg(2+) is required as a cofactor.

Its subcellular location is the cytoplasm. The enzyme catalyses Endonucleolytic cleavage at a junction such as a reciprocal single-stranded crossover between two homologous DNA duplexes (Holliday junction).. Functionally, the RuvA-RuvB-RuvC complex processes Holliday junction (HJ) DNA during genetic recombination and DNA repair. Endonuclease that resolves HJ intermediates. Cleaves cruciform DNA by making single-stranded nicks across the HJ at symmetrical positions within the homologous arms, yielding a 5'-phosphate and a 3'-hydroxyl group; requires a central core of homology in the junction. The consensus cleavage sequence is 5'-(A/T)TT(C/G)-3'. Cleavage occurs on the 3'-side of the TT dinucleotide at the point of strand exchange. HJ branch migration catalyzed by RuvA-RuvB allows RuvC to scan DNA until it finds its consensus sequence, where it cleaves and resolves the cruciform DNA. This is Crossover junction endodeoxyribonuclease RuvC from Alkaliphilus oremlandii (strain OhILAs) (Clostridium oremlandii (strain OhILAs)).